Reading from the N-terminus, the 244-residue chain is Small ribosomal subunit protein uS2 (244 aa).

The protein belongs to the universal ribosomal protein uS2 family.

This chain is Small ribosomal subunit protein uS2, found in Buchnera aphidicola subsp. Schizaphis graminum (strain Sg).